Here is a 327-residue protein sequence, read N- to C-terminus: Aspartate--ammonia ligase (327 aa).

This sequence belongs to the class-II aminoacyl-tRNA synthetase family. AsnA subfamily.

It localises to the cytoplasm. The enzyme catalyses L-aspartate + NH4(+) + ATP = L-asparagine + AMP + diphosphate + H(+). Its pathway is amino-acid biosynthesis; L-asparagine biosynthesis; L-asparagine from L-aspartate (ammonia route): step 1/1. This is Aspartate--ammonia ligase from Bacillus anthracis (strain A0248).